Here is a 107-residue protein sequence, read N- to C-terminus: Integration host factor subunit beta (107 aa).

The segment at 54–107 is disordered; the sequence is NRRPARVGRNPKSGEKVQVPEKHVPHFKPGKELRERVDGRAGEPLKNDEPEDGQ. The segment covering 65 to 101 has biased composition (basic and acidic residues); the sequence is KSGEKVQVPEKHVPHFKPGKELRERVDGRAGEPLKND.

Belongs to the bacterial histone-like protein family. Heterodimer of an alpha and a beta chain.

In terms of biological role, this protein is one of the two subunits of integration host factor, a specific DNA-binding protein that functions in genetic recombination as well as in transcriptional and translational control. The sequence is that of Integration host factor subunit beta from Burkholderia thailandensis (strain ATCC 700388 / DSM 13276 / CCUG 48851 / CIP 106301 / E264).